The following is a 294-amino-acid chain: Halotolerance protein HAL1 (294 aa).

The disordered stretch occupies residues L115–N153. Residues I125–N153 are compositionally biased toward polar residues. S266 bears the Phosphoserine mark.

Its subcellular location is the cytoplasm. In terms of biological role, involved in salt tolerance. This chain is Halotolerance protein HAL1 (HAL1), found in Saccharomyces cerevisiae (strain ATCC 204508 / S288c) (Baker's yeast).